Consider the following 240-residue polypeptide: MIENWHRGFVLHRREYSETSLLVDFFTEEHGRITLLAKGARRPHSPLKAVLQPFTPLLLRWSGKGDLKTLTKAEPASLTLPMQTLALYSGFYVNEVLARVLENQTAYPELFQHYLQCMTRLATQPEQIEPILRTFEFQMLKALGYGVNFSICAATGDPVSPSMTYQFRENQGFIASLLQNNYTFLGKDLLAFEQLDFSDKATLQAAKRFTRMALKPYLGSQPLKSRELFQNILPNKLKSG.

This sequence belongs to the RecO family.

Its function is as follows. Involved in DNA repair and RecF pathway recombination. The chain is DNA repair protein RecO from Actinobacillus pleuropneumoniae serotype 3 (strain JL03).